The primary structure comprises 295 residues: Elongation factor Ts (295 aa).

The tract at residues 79-82 (TDFV) is involved in Mg(2+) ion dislocation from EF-Tu.

It belongs to the EF-Ts family.

It localises to the cytoplasm. Its function is as follows. Associates with the EF-Tu.GDP complex and induces the exchange of GDP to GTP. It remains bound to the aminoacyl-tRNA.EF-Tu.GTP complex up to the GTP hydrolysis stage on the ribosome. The chain is Elongation factor Ts from Bacillus mycoides (strain KBAB4) (Bacillus weihenstephanensis).